The sequence spans 588 residues: Outer membrane transporter CdiB (588 aa).

Residues 104–179 (FTVSSIVVSG…GVLHITVMEG (76 aa)) enclose the POTRA domain.

It belongs to the TPS (TC 1.B.20) family.

The protein localises to the cell outer membrane. Potential outer membrane protein component of a toxin-immunity protein module, which functions as a cellular contact-dependent growth inhibition (CDI) system. CDI modules allow bacteria to communicate with and inhibit the growth of closely related neighboring bacteria in a contact-dependent fashion. This protein may be required for secretion and assembly of the CdiA toxin protein. Inhibitory cells must be in logarithmic (not stationary) phase to inhibit growth of their targets, while the presence of P or S but not type 1 pili protects the target cells against growth inhibition. Its function is as follows. Probable member of a two partner secretion pathway (TPS) in which it mediates the secretion of CdiA. This is Outer membrane transporter CdiB from Escherichia coli.